A 751-amino-acid polypeptide reads, in one-letter code: Catalase-peroxidase 2 (751 aa).

Positions methionine 1–alanine 27 are cleaved as a signal peptide. The segment at residues tryptophan 115–tyrosine 238 is a cross-link (tryptophyl-tyrosyl-methioninium (Trp-Tyr) (with M-264)). Residue histidine 116 is the Proton acceptor of the active site. Positions tyrosine 238–methionine 264 form a cross-link, tryptophyl-tyrosyl-methioninium (Tyr-Met) (with W-115). Histidine 279 is a binding site for heme b.

It belongs to the peroxidase family. Peroxidase/catalase subfamily. Homodimer or homotetramer. It depends on heme b as a cofactor. In terms of processing, formation of the three residue Trp-Tyr-Met cross-link is important for the catalase, but not the peroxidase activity of the enzyme.

It catalyses the reaction H2O2 + AH2 = A + 2 H2O. It carries out the reaction 2 H2O2 = O2 + 2 H2O. Its function is as follows. Bifunctional enzyme with both catalase and broad-spectrum peroxidase activity. The sequence is that of Catalase-peroxidase 2 from Idiomarina loihiensis (strain ATCC BAA-735 / DSM 15497 / L2-TR).